A 369-amino-acid chain; its full sequence is Protein VP6 (369 aa).

The disordered stretch occupies residues 20–208 (LEQRSIAPLL…EEAKVGGGDR (189 aa)). Residues 29-66 (LREKNSTEAKSKLKEDGEKKNKSEKEENKIHDDRRVES) show a composition bias toward basic and acidic residues. Composition is skewed to gly residues over residues 92–111 (TGGG…GGVG) and 162–171 (TSGGLQGRGG). Over residues 196–208 (TEGEEAKVGGGDR) the composition is skewed to basic and acidic residues.

Belongs to the orbivirus VP6 family.

Its subcellular location is the virion. The polypeptide is Protein VP6 (S9) (African horse sickness virus 3 (AHSV-3)).